The following is a 236-amino-acid chain: 1-(5-phosphoribosyl)-5-[(5-phosphoribosylamino)methylideneamino] imidazole-4-carboxamide isomerase (236 aa).

The active-site Proton acceptor is the Asp8. Catalysis depends on Asp127, which acts as the Proton donor.

Belongs to the HisA/HisF family.

Its subcellular location is the cytoplasm. It carries out the reaction 1-(5-phospho-beta-D-ribosyl)-5-[(5-phospho-beta-D-ribosylamino)methylideneamino]imidazole-4-carboxamide = 5-[(5-phospho-1-deoxy-D-ribulos-1-ylimino)methylamino]-1-(5-phospho-beta-D-ribosyl)imidazole-4-carboxamide. It participates in amino-acid biosynthesis; L-histidine biosynthesis; L-histidine from 5-phospho-alpha-D-ribose 1-diphosphate: step 4/9. The polypeptide is 1-(5-phosphoribosyl)-5-[(5-phosphoribosylamino)methylideneamino] imidazole-4-carboxamide isomerase (Campylobacter fetus subsp. fetus (strain 82-40)).